The sequence spans 549 residues: T-complex protein 1 subunit theta (549 aa).

This sequence belongs to the TCP-1 chaperonin family. Heterooligomeric complex of about 850 to 900 kDa that forms two stacked rings, 12 to 16 nm in diameter. Interacts with CCT3, KNAT1, STM and TTG1. Expressed in shoot meristems, root tip, vasculature and leaf epidermis.

It is found in the cytoplasm. Functionally, molecular chaperone; assists the folding of proteins upon ATP hydrolysis. Known to play a role, in vitro, in the folding of actin and tubulin. Contributes to stem cell maintenance through its impact on transcription factors trafficking through plasmodesmata. Probably involved in refolding translocated, partially unfolded proteins, including viral movement proteins. This Arabidopsis thaliana (Mouse-ear cress) protein is T-complex protein 1 subunit theta.